Here is a 148-residue protein sequence, read N- to C-terminus: MNASNPCRRFPRSARVRTRAQYTVVFDTARRTSDPLLSLHWRSGETPPRLGMAVSRKVDTRAVGRNRIKRVLRDAMRHLLPELAGGDYVIVARSAAAKATNPQIRDAFVRLLRRAGALPLPAAPGTMPPARAPRPSSLSPTEPDPRSD.

Positions 119-148 (PLPAAPGTMPPARAPRPSSLSPTEPDPRSD) are disordered.

Belongs to the RnpA family. In terms of assembly, consists of a catalytic RNA component (M1 or rnpB) and a protein subunit.

It carries out the reaction Endonucleolytic cleavage of RNA, removing 5'-extranucleotides from tRNA precursor.. RNaseP catalyzes the removal of the 5'-leader sequence from pre-tRNA to produce the mature 5'-terminus. It can also cleave other RNA substrates such as 4.5S RNA. The protein component plays an auxiliary but essential role in vivo by binding to the 5'-leader sequence and broadening the substrate specificity of the ribozyme. The polypeptide is Ribonuclease P protein component (Xanthomonas campestris pv. campestris (strain 8004)).